A 287-amino-acid polypeptide reads, in one-letter code: Steroidogenic acute regulatory protein, mitochondrial (287 aa).

The N-terminal 61 residues, 1–61 (MLPATFKLCA…RRSSLLSSRI (61 aa)), are a transit peptide targeting the mitochondrion. Positions 66-279 (GYNEAEVSYV…LRQRMADNSV (214 aa)) constitute an START domain.

In terms of assembly, may interact with TSPO.

The protein resides in the mitochondrion. It carries out the reaction cholesterol(in) = cholesterol(out). It functions in the pathway steroid metabolism; cholesterol metabolism. In terms of biological role, plays a key role in steroid hormone synthesis by enhancing the metabolism of cholesterol into pregnenolone. Mediates the transfer of cholesterol from the outer mitochondrial membrane to the inner mitochondrial membrane where it is cleaved to pregnenolone. The chain is Steroidogenic acute regulatory protein, mitochondrial (star) from Salvelinus fontinalis (Brook trout).